We begin with the raw amino-acid sequence, 340 residues long: Cytochrome c peroxidase, mitochondrial (340 aa).

Residues Met-1–Leu-17 constitute a mitochondrion transit peptide. Catalysis depends on His-101, which acts as the Proton acceptor. The tract at residues Trp-175 to Gln-198 is disordered. Residue His-224 participates in heme b binding. Trp-240 serves as the catalytic Tryptophan radical intermediate.

The protein belongs to the peroxidase family. Cytochrome c peroxidase subfamily. As to quaternary structure, forms a one-to-one complex with cytochrome c. Requires heme b as cofactor.

It is found in the mitochondrion matrix. The protein resides in the mitochondrion intermembrane space. The enzyme catalyses 2 Fe(II)-[cytochrome c] + H2O2 + 2 H(+) = 2 Fe(III)-[cytochrome c] + 2 H2O. Its function is as follows. Destroys radicals which are normally produced within the cells and which are toxic to biological systems. In Yarrowia lipolytica (strain CLIB 122 / E 150) (Yeast), this protein is Cytochrome c peroxidase, mitochondrial (CCP1).